The following is a 552-amino-acid chain: CTP synthase (552 aa).

The segment at 1–270 (MTKFVFVTGG…DGLICDKLRL (270 aa)) is amidoligase domain. Serine 13 contacts CTP. Serine 13 contributes to the UTP binding site. ATP-binding positions include 14-19 (SLGKGI) and aspartate 71. Residues aspartate 71 and glutamate 144 each coordinate Mg(2+). CTP contacts are provided by residues 151 to 153 (DIE), 191 to 196 (KTKPTQ), and lysine 227. UTP-binding positions include 191–196 (KTKPTQ) and lysine 227. One can recognise a Glutamine amidotransferase type-1 domain in the interval 295–548 (KIAMVGKYVE…VKAAIERQKA (254 aa)). Glycine 357 is an L-glutamine binding site. Cysteine 384 serves as the catalytic Nucleophile; for glutamine hydrolysis. Residues 385 to 388 (LGMQ), glutamate 408, and arginine 474 each bind L-glutamine. Residues histidine 521 and glutamate 523 contribute to the active site.

The protein belongs to the CTP synthase family. As to quaternary structure, homotetramer.

It carries out the reaction UTP + L-glutamine + ATP + H2O = CTP + L-glutamate + ADP + phosphate + 2 H(+). The catalysed reaction is L-glutamine + H2O = L-glutamate + NH4(+). The enzyme catalyses UTP + NH4(+) + ATP = CTP + ADP + phosphate + 2 H(+). It participates in pyrimidine metabolism; CTP biosynthesis via de novo pathway; CTP from UDP: step 2/2. Allosterically activated by GTP, when glutamine is the substrate; GTP has no effect on the reaction when ammonia is the substrate. The allosteric effector GTP functions by stabilizing the protein conformation that binds the tetrahedral intermediate(s) formed during glutamine hydrolysis. Inhibited by the product CTP, via allosteric rather than competitive inhibition. In terms of biological role, catalyzes the ATP-dependent amination of UTP to CTP with either L-glutamine or ammonia as the source of nitrogen. Regulates intracellular CTP levels through interactions with the four ribonucleotide triphosphates. The protein is CTP synthase of Delftia acidovorans (strain DSM 14801 / SPH-1).